Consider the following 371-residue polypeptide: Ferrochelatase (371 aa).

Fe cation contacts are provided by H218 and E299.

This sequence belongs to the ferrochelatase family.

Its subcellular location is the cytoplasm. It catalyses the reaction heme b + 2 H(+) = protoporphyrin IX + Fe(2+). It participates in porphyrin-containing compound metabolism; protoheme biosynthesis; protoheme from protoporphyrin-IX: step 1/1. Functionally, catalyzes the ferrous insertion into protoporphyrin IX. The polypeptide is Ferrochelatase (Ralstonia nicotianae (strain ATCC BAA-1114 / GMI1000) (Ralstonia solanacearum)).